A 651-amino-acid chain; its full sequence is Acetyl-coenzyme A synthetase 1 (651 aa).

Residues 191–194, Thr311, and Asn335 each bind CoA; that span reads RGGK. Residues 387–389, 411–416, Asp500, and Arg515 each bind ATP; these read GEP and DTWWQT. CoA is bound at residue Ser523. Arg526 is a binding site for ATP. Mg(2+) is bound by residues Val537, His539, and Val542. Arg584 contacts CoA. At Lys609 the chain carries N6-acetyllysine.

This sequence belongs to the ATP-dependent AMP-binding enzyme family. Mg(2+) is required as a cofactor. Post-translationally, acetylated. Deacetylation by the SIR2-homolog deacetylase activates the enzyme.

The catalysed reaction is acetate + ATP + CoA = acetyl-CoA + AMP + diphosphate. In terms of biological role, catalyzes the conversion of acetate into acetyl-CoA (AcCoA), an essential intermediate at the junction of anabolic and catabolic pathways. AcsA undergoes a two-step reaction. In the first half reaction, AcsA combines acetate with ATP to form acetyl-adenylate (AcAMP) intermediate. In the second half reaction, it can then transfer the acetyl group from AcAMP to the sulfhydryl group of CoA, forming the product AcCoA. The chain is Acetyl-coenzyme A synthetase 1 from Pseudomonas aeruginosa (strain ATCC 15692 / DSM 22644 / CIP 104116 / JCM 14847 / LMG 12228 / 1C / PRS 101 / PAO1).